Consider the following 328-residue polypeptide: MAPTEMNIERKVEADVAVIPNDGKRAYVTFLAGNQDYWMGVVGLAKGLRKVKAAYPLVVAMLPDVPKEHRQILVAQGCIIREIEPVYPPENQAGYAMAYYVINYSKLRIWEFVEYEKMIYLDGDIQVFSNIDHLFDTPSGYLYAVKDCFCEGSWSKTPQYKIGYCQQSPEKVRWPMNSLGHVPPLYFNAGMLVFEPNLLTYEDLLQTVQVTTPTSFAEQPIPSTYNLVLAMLWRHPECIDLDQINVVHYCAKGSKPWRFTGEEEHMDREDIKMLVKKWWDIYEDTSLDYKTFVENESKLNPIVAALASKESGCDGLTSLAPSAAKSNP.

Lysine 106 is a catalytic residue. Aspartate 122, aspartate 124, and histidine 248 together coordinate Mn(2+).

It belongs to the glycosyltransferase 8 family. Galactosyltransferase subfamily. A divalent metal cation is required as a cofactor.

The protein localises to the cytoplasm. It carries out the reaction myo-inositol + UDP-alpha-D-galactose = alpha-D-galactosyl-(1-&gt;3)-1D-myo-inositol + UDP + H(+). Its function is as follows. Galactinol synthase involved in the biosynthesis of raffinose family oligosaccharides (RFOs) that function as osmoprotectants. May promote plant stress tolerance. This Arabidopsis thaliana (Mouse-ear cress) protein is Galactinol synthase 10 (GOLS10).